A 457-amino-acid chain; its full sequence is Multidrug resistance protein MdtK (457 aa).

A run of 12 helical transmembrane segments spans residues 11–31, 53–73, 93–113, 127–147, 160–180, 189–209, 243–263, 276–296, 314–334, 350–370, 387–407, and 418–438; these read LLAL…MGFV, IWLP…PVIA, WLAG…GYII, AVGY…FQVA, GMVM…IFIY, GGVG…LAMV, LPIA…ALLV, IALN…AAVT, AART…IFTV, VVTL…SDSI, IFYI…YILA, and PAGF…MMML.

Belongs to the multi antimicrobial extrusion (MATE) (TC 2.A.66.1) family. MdtK subfamily.

It is found in the cell inner membrane. Multidrug efflux pump that functions probably as a Na(+)/drug antiporter. The protein is Multidrug resistance protein MdtK of Escherichia coli O17:K52:H18 (strain UMN026 / ExPEC).